A 337-amino-acid polypeptide reads, in one-letter code: Nucleoid-associated protein HS_0228 (337 aa).

Belongs to the YejK family.

It localises to the cytoplasm. The protein localises to the nucleoid. In Histophilus somni (strain 129Pt) (Haemophilus somnus), this protein is Nucleoid-associated protein HS_0228.